The sequence spans 180 residues: Adenine phosphoribosyltransferase (180 aa).

It belongs to the purine/pyrimidine phosphoribosyltransferase family. Homodimer.

It localises to the cytoplasm. The catalysed reaction is AMP + diphosphate = 5-phospho-alpha-D-ribose 1-diphosphate + adenine. It functions in the pathway purine metabolism; AMP biosynthesis via salvage pathway; AMP from adenine: step 1/1. Its function is as follows. Catalyzes a salvage reaction resulting in the formation of AMP, that is energically less costly than de novo synthesis. The sequence is that of Adenine phosphoribosyltransferase from Haemophilus influenzae (strain PittEE).